Reading from the N-terminus, the 121-residue chain is Fluoride-specific ion channel FluC (121 aa).

4 consecutive transmembrane segments (helical) span residues 5–25, 33–53, 66–83, and 98–118; these read LLIFLGGGTGSVLRYLLTISI, FPWGTFAVNILGCILIGVFYT, LMLTIGLCGGFTTFSTFS, and FFTYIIGSVVLGILGVMLGIW. Glycine 74 and threonine 77 together coordinate Na(+).

Belongs to the fluoride channel Fluc/FEX (TC 1.A.43) family.

The protein resides in the cell inner membrane. The enzyme catalyses fluoride(in) = fluoride(out). Na(+) is not transported, but it plays an essential structural role and its presence is essential for fluoride channel function. Functionally, fluoride-specific ion channel. Important for reducing fluoride concentration in the cell, thus reducing its toxicity. The protein is Fluoride-specific ion channel FluC of Phocaeicola vulgatus (strain ATCC 8482 / DSM 1447 / JCM 5826 / CCUG 4940 / NBRC 14291 / NCTC 11154) (Bacteroides vulgatus).